The chain runs to 707 residues: Acyl-CoA ligase 891, peroxisomal (707 aa).

Position 259 to 270 (259 to 270) interacts with ATP; that stretch reads INYTSGTTGPPK. Residues 525–549 form a fatty acid-binding region; sequence DGWFRTGDVCTIDEKGRFIIIDRRK. A Peroxisome targeting signal motif is present at residues 705 to 707; it reads AKL.

It belongs to the ATP-dependent AMP-binding enzyme family.

The protein resides in the peroxisome matrix. The enzyme catalyses (4E,8E)-10-(4-hydroxy-6-methoxy-7-methyl-3-oxo-1,3-dihydro-2-benzofuran-5-yl)-4,8-dimethyldeca-4,8-dienoate + ATP + CoA = (4E,8E)-10-(4-hydroxy-6-methoxy-7-methyl-3-oxo-1,3-dihydro-2-benzofuran-5-yl)-4,8-dimethyldeca-4,8-dienoyl-CoA + AMP + diphosphate. The protein operates within secondary metabolite biosynthesis; terpenoid biosynthesis. Functionally, acyl-CoA ligase involved in the biosynthesis of mycophenolic acid (MPA), the first isolated antibiotic natural product in the world obtained from a culture of Penicillium brevicompactum in 1893. The peroxisomal acyl-CoA ligase 891 converts the intermediate MFDHMP-3C into MFDHMP-3C-CoA which impairs its diffusion from the peroxisome. The first step of the pathway is the synthesis of 5-methylorsellinic acid (5MOA) by the cytosolic polyketide synthase mpaC. 5MOA is then converted to the phthalide compound 5,7-dihydroxy-4,6-dimethylphthalide (DHMP) by the endoplasmic reticulum-bound cytochrome P450 monooxygenase mpaDE. MpaDE first catalyzes hydroxylation of 5-MOA to 4,6-dihydroxy-2-(hydroxymethyl)-3-methylbenzoic acid (DHMB). MpaDE then acts as a lactone synthase that catalyzes the ring closure to convert DHMB into DHMP. The next step is the prenylation of DHMP by the Golgi apparatus-associated prenyltransferase mpaA to yield farnesyl-DHMP (FDHMP). The ER-bound oxygenase mpaB then mediates the oxidative cleavage the C19-C20 double bond in FDHMP to yield FDHMP-3C via a mycophenolic aldehyde intermediate. The O-methyltransferase mpaG catalyzes the methylation of FDHMP-3C to yield MFDHMP-3C. After the cytosolic methylation of FDHMP-3C, MFDHMP-3C enters into peroxisomes probably via free diffusion due to its low molecular weight. Upon a peroxisomal CoA ligation reaction, catalyzed by a beta-oxidation component enzyme acyl-CoA ligase ACL891, MFDHMP-3C-CoA would then be restricted to peroxisomes for the following beta-oxidation pathway steps. The peroxisomal beta-oxidation machinery than converts MFDHMP-3C-CoA into MPA_CoA, via a beta-oxidation chain-shortening process. Finally mpaH acts as a peroxisomal acyl-CoA hydrolase with high substrate specificity toward MPA-CoA to release the final product MPA. The sequence is that of Acyl-CoA ligase 891, peroxisomal from Penicillium roqueforti (strain FM164).